Consider the following 257-residue polypeptide: UPF0246 protein CV_1250 (257 aa).

It belongs to the UPF0246 family.

This Chromobacterium violaceum (strain ATCC 12472 / DSM 30191 / JCM 1249 / CCUG 213 / NBRC 12614 / NCIMB 9131 / NCTC 9757 / MK) protein is UPF0246 protein CV_1250.